The sequence spans 466 residues: Putative transcription factor bHLH041 (466 aa).

3 disordered regions span residues 108–129 (PANS…SLSP), 194–213 (LTGP…KGRA), and 260–289 (RENA…TQLQ). Positions 120-129 (PSSSSSSLSP) are enriched in low complexity. The segment covering 268 to 279 (EGSGGSGGGGRY) has biased composition (gly residues). One can recognise a bHLH domain in the interval 285 to 334 (ATQLQHMISERKRREKLNESFQALRSLLPPGTKKDKASVLSIAREQLSSL).

As to quaternary structure, homodimer.

It localises to the nucleus. This is Putative transcription factor bHLH041 (BHLH41) from Arabidopsis thaliana (Mouse-ear cress).